Consider the following 1931-residue polypeptide: Cytadherence high molecular weight protein 2 (1931 aa).

Coiled coils occupy residues 1626 to 1659 (KEHQ…LTES), 1768 to 1846 (FNTQ…IKTN), and 1903 to 1930 (HAKK…KQTS).

Its function is as follows. Component of the cytoskeleton-like structure which stabilizes the shape of the wall-less Mycoplasma. This cytoskeleton-like network of accessory proteins containing HMW proteins 1 to 5 allows the proper anchoring of cytadhesin proteins in the mycoplasmal membrane at the attachment organelle. In Mycoplasmoides gallisepticum (strain R(low / passage 15 / clone 2)) (Mycoplasma gallisepticum), this protein is Cytadherence high molecular weight protein 2 (hlp2).